The chain runs to 396 residues: 1-deoxy-D-xylulose 5-phosphate reductoisomerase (396 aa).

NADPH is bound by residues T13, G14, S15, I16, and N127. Position 128 (K128) interacts with 1-deoxy-D-xylulose 5-phosphate. E129 contributes to the NADPH binding site. D153 is a binding site for Mn(2+). Positions 154, 155, 184, and 207 each coordinate 1-deoxy-D-xylulose 5-phosphate. A Mn(2+)-binding site is contributed by E155. G213 contacts NADPH. Positions 220, 225, 226, and 229 each coordinate 1-deoxy-D-xylulose 5-phosphate. Residue E229 participates in Mn(2+) binding.

It belongs to the DXR family. Mg(2+) serves as cofactor. The cofactor is Mn(2+).

It carries out the reaction 2-C-methyl-D-erythritol 4-phosphate + NADP(+) = 1-deoxy-D-xylulose 5-phosphate + NADPH + H(+). The protein operates within isoprenoid biosynthesis; isopentenyl diphosphate biosynthesis via DXP pathway; isopentenyl diphosphate from 1-deoxy-D-xylulose 5-phosphate: step 1/6. Functionally, catalyzes the NADPH-dependent rearrangement and reduction of 1-deoxy-D-xylulose-5-phosphate (DXP) to 2-C-methyl-D-erythritol 4-phosphate (MEP). This Pseudomonas aeruginosa (strain UCBPP-PA14) protein is 1-deoxy-D-xylulose 5-phosphate reductoisomerase.